We begin with the raw amino-acid sequence, 306 residues long: Pantothenate kinase (306 aa).

Residue 91–98 (GSVAVGKS) coordinates ATP.

It belongs to the prokaryotic pantothenate kinase family.

The protein localises to the cytoplasm. It carries out the reaction (R)-pantothenate + ATP = (R)-4'-phosphopantothenate + ADP + H(+). It participates in cofactor biosynthesis; coenzyme A biosynthesis; CoA from (R)-pantothenate: step 1/5. The chain is Pantothenate kinase from Streptococcus pyogenes serotype M5 (strain Manfredo).